The chain runs to 347 residues: Tyrosine recombinase XerC 2 (347 aa).

One can recognise a Core-binding (CB) domain in the interval 17-108 (LVLTRYMEAH…PLKTWFKWLA (92 aa)). One can recognise a Tyr recombinase domain in the interval 125 to 313 (KLPKHLPRAI…SIEHLRAIHD (189 aa)). Active-site residues include Arg170, Lys195, His265, Arg268, and His291. Tyr300 functions as the O-(3'-phospho-DNA)-tyrosine intermediate in the catalytic mechanism.

The protein belongs to the 'phage' integrase family.

The protein resides in the cytoplasm. Site-specific tyrosine recombinase, which acts by catalyzing the cutting and rejoining of the recombining DNA molecules. The protein is Tyrosine recombinase XerC 2 of Ralstonia nicotianae (strain ATCC BAA-1114 / GMI1000) (Ralstonia solanacearum).